Reading from the N-terminus, the 452-residue chain is tRNA modification GTPase MnmE (452 aa).

(6S)-5-formyl-5,6,7,8-tetrahydrofolate contacts are provided by Arg21, Glu82, and Arg121. The TrmE-type G domain maps to 214–372 (GARVVLVGRP…LAKTIATTLL (159 aa)). Asn224 is a K(+) binding site. Residues 224–229 (NVGKSS), 243–249 (TPIPGTT), 268–271 (DTAG), and 353–355 (SAR) contribute to the GTP site. Mg(2+) is bound at residue Ser228. Thr243, Ile245, and Thr248 together coordinate K(+). Thr249 contacts Mg(2+). Lys452 is a (6S)-5-formyl-5,6,7,8-tetrahydrofolate binding site.

It belongs to the TRAFAC class TrmE-Era-EngA-EngB-Septin-like GTPase superfamily. TrmE GTPase family. As to quaternary structure, homodimer. Heterotetramer of two MnmE and two MnmG subunits. K(+) is required as a cofactor.

It is found in the cytoplasm. Its function is as follows. Exhibits a very high intrinsic GTPase hydrolysis rate. Involved in the addition of a carboxymethylaminomethyl (cmnm) group at the wobble position (U34) of certain tRNAs, forming tRNA-cmnm(5)s(2)U34. The protein is tRNA modification GTPase MnmE of Chloroflexus aurantiacus (strain ATCC 29366 / DSM 635 / J-10-fl).